A 590-amino-acid chain; its full sequence is Type I inositol polyphosphate 5-phosphatase 1 (590 aa).

The tract at residues Asp47–Pro73 is disordered. Residues Tyr48–Glu57 show a composition bias toward acidic residues. Position 60 is a phosphoserine (Ser60). Catalytic regions lie at residues Glu445–Ser460 and Gly523–Lys538.

The protein belongs to the inositol polyphosphate 5-phosphatase family. As to expression, expressed ubiquitously.

It catalyses the reaction 1D-myo-inositol 1,4,5-trisphosphate + H2O = 1D-myo-inositol 1,4-bisphosphate + phosphate. The enzyme catalyses 1D-myo-inositol 1,3,4,5-tetrakisphosphate + H2O = 1D-myo-inositol 1,3,4-trisphosphate + phosphate. In terms of biological role, has phosphatase activity toward Ins(1,4,5)P3 and Ins(1,3,4,5)P4, but not toward Ins(1,4)P2, Ins(1)P. Seems to be involved in the abscisic acid (ABA) signaling pathway. Could also be able to hydrolyze PtdIns(4,5)P2 and PtdIns(3,4,5)P3. The chain is Type I inositol polyphosphate 5-phosphatase 1 from Arabidopsis thaliana (Mouse-ear cress).